The primary structure comprises 569 residues: Proline--tRNA ligase (569 aa).

Belongs to the class-II aminoacyl-tRNA synthetase family. ProS type 1 subfamily. Homodimer.

The protein resides in the cytoplasm. The catalysed reaction is tRNA(Pro) + L-proline + ATP = L-prolyl-tRNA(Pro) + AMP + diphosphate. In terms of biological role, catalyzes the attachment of proline to tRNA(Pro) in a two-step reaction: proline is first activated by ATP to form Pro-AMP and then transferred to the acceptor end of tRNA(Pro). As ProRS can inadvertently accommodate and process non-cognate amino acids such as alanine and cysteine, to avoid such errors it has two additional distinct editing activities against alanine. One activity is designated as 'pretransfer' editing and involves the tRNA(Pro)-independent hydrolysis of activated Ala-AMP. The other activity is designated 'posttransfer' editing and involves deacylation of mischarged Ala-tRNA(Pro). The misacylated Cys-tRNA(Pro) is not edited by ProRS. This chain is Proline--tRNA ligase, found in Dehalococcoides mccartyi (strain ATCC BAA-2266 / KCTC 15142 / 195) (Dehalococcoides ethenogenes (strain 195)).